The following is an 82-amino-acid chain: MASLVQLRDAIALSGSADANQLSHQLAMPLPLVEAMLEKLTAMGKIERIEQDNSGCLTGSCKSCPEGKNQCSTVIYQLKNHR.

Residues Cys-56, Cys-61, Cys-64, and Cys-71 each contribute to the iron-sulfur cluster site.

This sequence belongs to the FeoC family.

Its function is as follows. May function as a transcriptional regulator that controls feoABC expression. This chain is Probable [Fe-S]-dependent transcriptional repressor, found in Yersinia enterocolitica serotype O:8 / biotype 1B (strain NCTC 13174 / 8081).